The primary structure comprises 208 residues: Small ribosomal subunit protein uS4 (208 aa).

An S4 RNA-binding domain is found at 98–160 (QRLDNVVYRM…SKNNSQIVRA (63 aa)).

The protein belongs to the universal ribosomal protein uS4 family. Part of the 30S ribosomal subunit. Contacts protein S5. The interaction surface between S4 and S5 is involved in control of translational fidelity.

In terms of biological role, one of the primary rRNA binding proteins, it binds directly to 16S rRNA where it nucleates assembly of the body of the 30S subunit. Functionally, with S5 and S12 plays an important role in translational accuracy. This Sulfurimonas denitrificans (strain ATCC 33889 / DSM 1251) (Thiomicrospira denitrificans (strain ATCC 33889 / DSM 1251)) protein is Small ribosomal subunit protein uS4.